The following is a 282-amino-acid chain: AB hydrolase superfamily protein FGSG_00045 (282 aa).

Residues 1–10 are compositionally biased toward polar residues; that stretch reads MAPISSTRPS. Residues 1 to 22 are disordered; the sequence is MAPISSTRPSHSIAADNPNPTT. The 249-residue stretch at 22 to 270 folds into the AB hydrolase-1 domain; the sequence is TQVNFNTNMT…FADMVKRWII (249 aa).

This sequence belongs to the AB hydrolase superfamily.

It functions in the pathway mycotoxin biosynthesis. Functionally, AB hydrolase superfamily protein; part of the gene cluster that mediates the biosynthesis of gramillins A and B, bicyclic lipopeptides that induce cell death in maize leaves but not in wheat leaves. The nonribosomal peptide synthetase GRA1 incorporates respectively a glutamic adic (Glu), a leucine (Leu), a serine (Ser), a hydroxyglutamine (HOGln), a 2-amino decanoic acid, and 2 cysteins (CysB and CysA). The biosynthesis of 2-amino decanoic acid incorporated in gramillins could be initiated by a fatty acid synthase composed of the alpha and beta subunits FGSG_00036 and FGSG_11656. The cytochrome P450 monooxygenase FGSG_15680 could hydroxylate the fatty acid chain. Subsequent oxidation to the ketone by the oxidoreductase FGSG_00048 and transamination by aminotransferase FGSG_00049 could form 2-amino-decanoic acid. On the other hand, FGSG_15680 could also be responsible for the HO-modified glutamine at the gamma-position. Whether hydroxylation occurs on the fully assembled product or on the Gln residue prior to assembly into the gramillins requires further proof. The thioredoxin FGSG_00043 could also be required for the disulfide-bond formation between CysA and CysB. The specific involvement of the remaining proteins from the cluster is more difficult to discern, but could have broader regulatory (FGSG_00040 and FGSG_11657) or enzymatic functions (FGSG_00044 and FGSG_00045). The final C-domain of GRA1 does not possess the expected sequence of a termination CT domain, often implicated in macrocyclization and release of a cyclopeptidein fungal NRPs; and the thioesterase FGSG_00047 may act in concert with the terminal C-domain of GRA1 to catalyze the formation of the macrocyclic anhydride and release of the products. The protein is AB hydrolase superfamily protein FGSG_00045 of Gibberella zeae (strain ATCC MYA-4620 / CBS 123657 / FGSC 9075 / NRRL 31084 / PH-1) (Wheat head blight fungus).